The chain runs to 298 residues: ATP phosphoribosyltransferase (298 aa).

Belongs to the ATP phosphoribosyltransferase family. Long subfamily. Mg(2+) is required as a cofactor.

The protein localises to the cytoplasm. The catalysed reaction is 1-(5-phospho-beta-D-ribosyl)-ATP + diphosphate = 5-phospho-alpha-D-ribose 1-diphosphate + ATP. It participates in amino-acid biosynthesis; L-histidine biosynthesis; L-histidine from 5-phospho-alpha-D-ribose 1-diphosphate: step 1/9. Feedback inhibited by histidine. Its function is as follows. Catalyzes the condensation of ATP and 5-phosphoribose 1-diphosphate to form N'-(5'-phosphoribosyl)-ATP (PR-ATP). Has a crucial role in the pathway because the rate of histidine biosynthesis seems to be controlled primarily by regulation of HisG enzymatic activity. The polypeptide is ATP phosphoribosyltransferase (Psychromonas ingrahamii (strain DSM 17664 / CCUG 51855 / 37)).